We begin with the raw amino-acid sequence, 292 residues long: NAD-dependent protein deacetylase sir-2.4 (292 aa).

Residues 31 to 292 form the Deacetylase sirtuin-type domain; it reads IEKLRTLYNH…DEVPIPLKIS (262 aa). NAD(+) contacts are provided by residues 56–75 and 116–119; these read GAGVSTGSKLPDFRGKQGVW and QNVD. Residue histidine 136 is the Proton acceptor of the active site. Residues cysteine 144, cysteine 147, cysteine 163, and cysteine 169 each coordinate Zn(2+). NAD(+) contacts are provided by residues 216–218, 242–244, and valine 260; these read GTS and NYQ.

It belongs to the sirtuin family. Class IV subfamily. Requires Zn(2+) as cofactor.

It carries out the reaction N(6)-acetyl-L-lysyl-[protein] + NAD(+) + H2O = 2''-O-acetyl-ADP-D-ribose + nicotinamide + L-lysyl-[protein]. Its function is as follows. NAD-dependent protein deacetylase. This is NAD-dependent protein deacetylase sir-2.4 (sir-2.4) from Caenorhabditis elegans.